The following is a 189-amino-acid chain: Putative zinc finger protein ORF189 (189 aa).

The segment at 114-137 adopts a C2H2-type zinc-finger fold; sequence YVCPYCVSRFPTVRALKIHLKRRH.

The chain is Putative zinc finger protein ORF189 from Acidianus two-tailed virus (ATV).